The following is a 334-amino-acid chain: Ornithine carbamoyltransferase (334 aa).

Residues 56–59 (STRT), Gln83, Arg107, and 134–137 (HPTQ) contribute to the carbamoyl phosphate site. Residues Asn168, Asp232, and 236–237 (SM) contribute to the L-ornithine site. Carbamoyl phosphate is bound by residues 274–275 (CL) and Arg320.

It belongs to the aspartate/ornithine carbamoyltransferase superfamily. OTCase family.

Its subcellular location is the cytoplasm. It carries out the reaction carbamoyl phosphate + L-ornithine = L-citrulline + phosphate + H(+). It functions in the pathway amino-acid biosynthesis; L-arginine biosynthesis; L-arginine from L-ornithine and carbamoyl phosphate: step 1/3. In terms of biological role, reversibly catalyzes the transfer of the carbamoyl group from carbamoyl phosphate (CP) to the N(epsilon) atom of ornithine (ORN) to produce L-citrulline. This Shigella boydii serotype 4 (strain Sb227) protein is Ornithine carbamoyltransferase.